A 956-amino-acid chain; its full sequence is Thrombospondin-3 (956 aa).

Positions 1-22 (METQELRGALALLLLCFFTSAS) are cleaved as a signal peptide. A Laminin G-like domain is found at 23-193 (QDLQVIDLLT…VESMKIILGG (171 aa)). 21 cysteine pairs are disulfide-bonded: Cys278-Cys289, Cys283-Cys300, Cys303-Cys314, Cys320-Cys332, Cys326-Cys341, Cys344-Cys368, Cys374-Cys388, Cys382-Cys397, Cys400-Cys412, Cys418-Cys432, Cys426-Cys442, Cys444-Cys455, Cys471-Cys478, Cys483-Cys503, Cys519-Cys539, Cys542-Cys562, Cys578-Cys598, Cys601-Cys621, Cys639-Cys659, Cys679-Cys699, and Cys715-Cys936. Asn310 carries an N-linked (GlcNAc...) asparagine glycan. The EGF-like 1; calcium-binding domain occupies 316-354 (DINECAHADPCFPGSSCINTMPGFHCEACPRGYKGTQVS). The region spanning 370–410 (DIDECNDGNNGGCDPNSICTNTVGSFKCGPCRLGFLGNQSQ) is the EGF-like 2; calcium-binding domain. Asn407 carries an N-linked (GlcNAc...) asparagine glycan. The region spanning 414 to 456 (PARTCHSPAHSPCHIHAHCLFERNGAVSCQCNVGWAGNGNVCG) is the EGF-like 3 domain. TSP type-3 repeat units lie at residues 457–491 (TDTD…NSGQ), 492–527 (EDAD…NKDQ), 528–550 (QNSD…NNDQ), 551–586 (KDTD…NPLQ), 587–609 (TDRD…NPTQ), 610–647 (TDAD…NSSQ), 648–687 (LDSD…NPNQ), and 688–723 (KDSD…EVTL). Disordered stretches follow at residues 518-537 (NCRL…SFGD) and 546-702 (PNND…CEDD). The segment covering 555–568 (GNGEGDACDNDVDG) has biased composition (acidic residues). Positions 612 to 628 (ADSDLVGDVCDTNEDSD) are enriched in acidic residues. N-linked (GlcNAc...) asparagine glycosylation occurs at Asn644. The segment covering 650–667 (SDNDGLGDECDGDDDNDG) has biased composition (acidic residues). One can recognise a TSP C-terminal domain in the interval 727–941 (RAYQTVVLDP…LQYRCNDTVP (215 aa)). Asn937 carries an N-linked (GlcNAc...) asparagine glycan.

This sequence belongs to the thrombospondin family. Oligomer; disulfide-linked.

Adhesive glycoprotein that mediates cell-to-cell and cell-to-matrix interactions. Can bind to fibrinogen, fibronectin, laminin and type V collagen. The protein is Thrombospondin-3 (THBS3) of Homo sapiens (Human).